Here is a 189-residue protein sequence, read N- to C-terminus: Hypoxanthine/guanine phosphoribosyltransferase (189 aa).

The protein belongs to the purine/pyrimidine phosphoribosyltransferase family. Archaeal HPRT subfamily. Homodimer.

The protein localises to the cytoplasm. The enzyme catalyses IMP + diphosphate = hypoxanthine + 5-phospho-alpha-D-ribose 1-diphosphate. It carries out the reaction GMP + diphosphate = guanine + 5-phospho-alpha-D-ribose 1-diphosphate. Its pathway is purine metabolism; IMP biosynthesis via salvage pathway; IMP from hypoxanthine: step 1/1. Its function is as follows. Catalyzes a salvage reaction resulting in the formation of IMP that is energically less costly than de novo synthesis. This Methanothermus fervidus (strain ATCC 43054 / DSM 2088 / JCM 10308 / V24 S) protein is Hypoxanthine/guanine phosphoribosyltransferase.